Reading from the N-terminus, the 225-residue chain is uncharacterized protein (225 aa).

4 helical membrane-spanning segments follow: residues 40-60 (LISL…LSIV), 63-83 (LAFF…PFSF), 151-171 (LSET…LTIL), and 176-196 (IFSL…IVSL).

Its subcellular location is the membrane. This is an uncharacterized protein from Saccharomyces cerevisiae (strain ATCC 204508 / S288c) (Baker's yeast).